The chain runs to 446 residues: Tetratricopeptide repeat protein 23 (446 aa).

TPR repeat units lie at residues 45–78 (LRLS…TRIC), 137–170 (VELF…SKEM), 186–219 (ARIK…TEIS), 310–347 (TAKF…KVAV), and 356–389 (AETY…QTLL). The disordered stretch occupies residues 410–446 (APEVPARPRPSPGAKAAFCAGGRPYSVPGRTRPSAAD).

Associated with the EvC complex composed of EFCAB7, IQCE, EVC2 and EVC.

Its subcellular location is the cell projection. The protein resides in the cilium. In terms of biological role, participates positively in the ciliary Hedgehog (Hh) signaling. The polypeptide is Tetratricopeptide repeat protein 23 (TTC23) (Bos taurus (Bovine)).